The primary structure comprises 86 residues: Kappa-theraphotoxin-Cg1a 4 (86 aa).

Positions 1-21 (MKASVLITLAVLGVMFVWASA) are cleaved as a signal peptide. A propeptide spanning residues 22-50 (AELEERGSDQRDSPAWLKSMERIFQSEER) is cleaved from the precursor. Disulfide bonds link cysteine 52/cysteine 66, cysteine 59/cysteine 71, and cysteine 65/cysteine 78. Phenylalanine 84 bears the Phenylalanine amide mark.

This sequence belongs to the neurotoxin 10 (Hwtx-1) family. 28 (Jztx-11) subfamily. In terms of tissue distribution, expressed by the venom gland.

It is found in the secreted. In terms of biological role, this toxin acts as a voltage-dependent gating-modifier. It inhibits the sodium conductance (IC(50)=124 nM) and slows the fast inactivation (EC(50)=1180 nM) of Nav1.5/SCN5A. It significantly shifts the activation to more depolarized voltages and decreases the deactivation of Nav1.5 currents upon extreme depolarization, but only slightly affects voltage-dependence of steady-state inactivation. In addition, this toxin causes an approximately five-fold decrease in the rate of recovery from inactivation and an approximately 1.9-fold reduction in the closed-state inactivation rate. This toxin integrates the functions of site 3 toxins (alpha-scorpion toxins) with site 4 toxins (beta-scorpion and spider toxins) by targeting multiple sites on Nav1.5. Also shows inhibition of voltage-gated potassium channels (5 uM completely inhibits Kv2.1/KCNB1, whereas 5 uM moderately inhibits Kv4.2/KCND2 Kv4.1/KCND1 channels). This Chilobrachys guangxiensis (Chinese earth tiger tarantula) protein is Kappa-theraphotoxin-Cg1a 4.